We begin with the raw amino-acid sequence, 256 residues long: Lysine-rich coiled-coil protein 1 (256 aa).

Disordered stretches follow at residues 61–83 (QRIP…TEDR) and 141–256 (GHST…ILGF). Composition is skewed to polar residues over residues 64-79 (PSGT…SSSQ) and 141-153 (GHST…SHRQ). Basic and acidic residues-rich tracts occupy residues 161-188 (HLEE…DLNK) and 218-227 (KNRDVSSKKE). A coiled-coil region spans residues 208 to 247 (TEKLKNRKEKKNRDVSSKKEDRKRRKEKKEQGEERTEEEM).

This chain is Lysine-rich coiled-coil protein 1 (Krcc1), found in Rattus norvegicus (Rat).